We begin with the raw amino-acid sequence, 527 residues long: Transcription factor RBF1 (527 aa).

5 disordered regions span residues 1 to 36 (MSSNKNQSDLNIPTNSASLKQKQRQQLGIKSEIGAS), 258 to 281 (ANLYPNEKDQKRKNKPDEPGHNEE), 328 to 365 (HHLLQQEQQQQQQQQQQQQQQQQQQQHNANSQAQQQAA), 395 to 433 (QLSQQQSQQQQLHHIPQQRQRTQSQQSQQQPQQTAHGLD), and 470 to 527 (TQGN…SGFL). A DNA-binding region spans residues 160–300 (HVRDALTTDE…LRMINPQHNH (141 aa)). The segment covering 263–281 (NEKDQKRKNKPDEPGHNEE) has biased composition (basic and acidic residues). Composition is skewed to low complexity over residues 332 to 365 (QQEQQQQQQQQQQQQQQQQQQQHNANSQAQQQAA) and 395 to 428 (QLSQQQSQQQQLHHIPQQRQRTQSQQSQQQPQQT).

Belongs to the RBF1 family.

The protein resides in the nucleus. The protein localises to the chromosome. It localises to the telomere. Transcriptional activator that binds to the RPG box and to telomeres. Involved in the regulation of the transition between yeast and filamentous forms and plays a role in virulence. Induces expression of HWP1, a major hyphal cell protein and virulence factor. This is Transcription factor RBF1 (RBF1) from Candida albicans (Yeast).